The sequence spans 373 residues: Queuine tRNA-ribosyltransferase (373 aa).

D93 serves as the catalytic Proton acceptor. Residues 93–97 (DSGGF), D147, Q191, and G218 contribute to the substrate site. The segment at 249-255 (GVGAPRD) is RNA binding. The active-site Nucleophile is D268. Residues 273–277 (TRNAR) are RNA binding; important for wobble base 34 recognition. Positions 306, 308, 311, and 337 each coordinate Zn(2+).

It belongs to the queuine tRNA-ribosyltransferase family. Homodimer. Within each dimer, one monomer is responsible for RNA recognition and catalysis, while the other monomer binds to the replacement base PreQ1. Requires Zn(2+) as cofactor.

The catalysed reaction is 7-aminomethyl-7-carbaguanine + guanosine(34) in tRNA = 7-aminomethyl-7-carbaguanosine(34) in tRNA + guanine. The protein operates within tRNA modification; tRNA-queuosine biosynthesis. Functionally, catalyzes the base-exchange of a guanine (G) residue with the queuine precursor 7-aminomethyl-7-deazaguanine (PreQ1) at position 34 (anticodon wobble position) in tRNAs with GU(N) anticodons (tRNA-Asp, -Asn, -His and -Tyr). Catalysis occurs through a double-displacement mechanism. The nucleophile active site attacks the C1' of nucleotide 34 to detach the guanine base from the RNA, forming a covalent enzyme-RNA intermediate. The proton acceptor active site deprotonates the incoming PreQ1, allowing a nucleophilic attack on the C1' of the ribose to form the product. After dissociation, two additional enzymatic reactions on the tRNA convert PreQ1 to queuine (Q), resulting in the hypermodified nucleoside queuosine (7-(((4,5-cis-dihydroxy-2-cyclopenten-1-yl)amino)methyl)-7-deazaguanosine). The protein is Queuine tRNA-ribosyltransferase of Solidesulfovibrio magneticus (strain ATCC 700980 / DSM 13731 / RS-1) (Desulfovibrio magneticus).